Consider the following 434-residue polypeptide: Adenylosuccinate synthetase (434 aa).

GTP contacts are provided by residues 25–31 (GDEGKGK) and 53–55 (GHT). Residue Asp26 is the Proton acceptor of the active site. Residues Asp26 and Gly53 each contribute to the Mg(2+) site. Residues 26-29 (DEGK), 51-54 (NAGH), Thr142, Arg156, Asn233, Thr248, and Arg312 each bind IMP. The active-site Proton donor is His54. 308 to 314 (VTTGRKR) contacts substrate. Residues Arg314, 340-342 (KLD), and 422-424 (GVG) contribute to the GTP site.

The protein belongs to the adenylosuccinate synthetase family. Homodimer. Mg(2+) serves as cofactor.

The protein localises to the cytoplasm. The catalysed reaction is IMP + L-aspartate + GTP = N(6)-(1,2-dicarboxyethyl)-AMP + GDP + phosphate + 2 H(+). It functions in the pathway purine metabolism; AMP biosynthesis via de novo pathway; AMP from IMP: step 1/2. With respect to regulation, competitively Inhibited by GMP. Allosterically inhibited by AMP. Functionally, plays an important role in the de novo pathway and in the salvage pathway of purine nucleotide biosynthesis. Catalyzes the first committed step in the biosynthesis of AMP from IMP. The chain is Adenylosuccinate synthetase (ade2) from Schizosaccharomyces pombe (strain 972 / ATCC 24843) (Fission yeast).